Reading from the N-terminus, the 157-residue chain is Large ribosomal subunit protein uL15 (157 aa).

This sequence belongs to the universal ribosomal protein uL15 family. In terms of assembly, part of the 50S ribosomal subunit.

Its function is as follows. Binds to the 23S rRNA. This is Large ribosomal subunit protein uL15 from Ehrlichia ruminantium (strain Welgevonden).